The chain runs to 488 residues: Neisserial heparin binding antigen (488 aa).

Positions 1-17 are cleaved as a signal peptide; the sequence is MFKRSVIAMACIFALSA. C18 is lipidated: N-palmitoyl cysteine. A lipid anchor (S-diacylglycerol cysteine) is attached at C18. The disordered stretch occupies residues 21 to 201; sequence GGGGSPDVKS…NPAPANGGSN (181 aa). Residues 43–53 are compositionally biased toward basic and acidic residues; that stretch reads SEKETEAKEDA. A compositionally biased stretch (low complexity) spans 54-70; sequence PQAGSQGQGAPSAQGSQ. Polar residues-rich tracts occupy residues 101–118 and 127–142; these read DMPQ…NHTP and MENQ…QPAN. A compositionally biased stretch (low complexity) spans 160–183; that stretch reads AGGQNAGNTAAQGANQAGNNQAAG. The Arg-rich motif signature appears at 296 to 306; the sequence is RFRRSARSRRS. A C1 fragment region spans residues 306–488; it reads SLPAEMPLIP…GVFAGKKEQD (183 aa).

This sequence belongs to the NHBA family. As to quaternary structure, the C-terminal beta-barrel forms a monomer. Cleaved in vivo by the Neisserial phase-variable autotransporter/serine protease NalP to give 2 fragments. The N-terminus remains in the cell outer membrane while the 22 kDa C-terminus (beginning on Ser-293) is soluble; this soluble fragment is called C2. Cleaved in vitro by human lactoferrin (LTF, between Arg-305 and Ser-306), this fragment is called C1. Cleavage by NalP or lactoferrin does not alter killing of Neisseria by bactericidal antibodies in vitro. Recombinant and cell surface protein is cleaved by human saliva kallikrein (KLK1) between Ser-303 and Arg-304; in saliva kallikrein is more active on NHBA than lactoferrin. Human plasma kallikrein (KLKB1) cleaves in a similar manner to KLK1.

It localises to the cell outer membrane. It is found in the cell surface. The protein localises to the host mitochondrion. Its function is as follows. A major human immunogenic protein detected in patients recovering from meningitidis, where it induces bactericidal antibodies. Binds heparin and heparan sulfate proteoglycan in vitro via the Arg-rich motif. Heparin-binding to this protein protects bacteria against killing by bactericidal antibodies (serum killing). Binds to human cells via the Arg-rich region; binding may require the intact protein as protein fragments do not bind to human cells. Protein binding to human cells is abolished by treatment with heparinase III but not chondroitinase ABC. The bacteria binds a number of human extracellular sialyated and/or sulfated glycans via this protein, including chondroitin sulfate (KD=5.2 nM), heparin (KD=52 nM) and ganglioside GT3 (KD=210 nM). The recombinant protein binds DNA non-specifically. Functionally, plays a role in extracellular-DNA (eDNA) mediated biofilm formation. In strain MC58 eDNA stimulates biofilm formation. When NHBA is not processed by NalP there is an increase in positively charged, NHBA- and IgA-derived DNA-binding peptides on the cell surface, resulting in increased DNA-binding peptides and increased biofilm formation. [C2 fragment] Localizes to host mitochondria when applied to the apical side of human endothelial cell layers, where it induces production of reactive oxygen species which lead to increased permeability of host endothelial cells. The C1 fragment (which lacks the first 14 residues of C2) does not have this effect. It is not known if this occurs during Neisseria infections. The chain is Neisserial heparin binding antigen from Neisseria meningitidis serogroup B (strain ATCC BAA-335 / MC58).